The primary structure comprises 203 residues: Ribonuclease HII (203 aa).

The region spanning 18–203 is the RNase H type-2 domain; sequence GQYAGVDEVG…SFRPVREALA (186 aa). Residues Asp-24, Glu-25, and Asp-116 each coordinate a divalent metal cation.

This sequence belongs to the RNase HII family. Mn(2+) is required as a cofactor. The cofactor is Mg(2+).

It localises to the cytoplasm. It carries out the reaction Endonucleolytic cleavage to 5'-phosphomonoester.. Its function is as follows. Endonuclease that specifically degrades the RNA of RNA-DNA hybrids. The sequence is that of Ribonuclease HII from Shewanella pealeana (strain ATCC 700345 / ANG-SQ1).